A 134-amino-acid chain; its full sequence is MIVRTIDEIIGTENEVESDTWTSRRLLLEKDGMGFSFHETIIYAGTETHIHYQNHLEAVYCVGGDGEIETVSDGKVYPIQDGTMYALDQHDEHYPRGGKTDMRLICTFNPPLVGTETHDENGVYPLLSKQPVGK.

This sequence belongs to the ectoine synthase family.

The enzyme catalyses (2S)-4-acetamido-2-aminobutanoate = L-ectoine + H2O. The protein operates within amine and polyamine biosynthesis; ectoine biosynthesis; L-ectoine from L-aspartate 4-semialdehyde: step 3/3. Its function is as follows. Catalyzes the circularization of gamma-N-acetyl-alpha,gamma-diaminobutyric acid (ADABA) to ectoine (1,4,5,6-tetrahydro-2-methyl-4-pyrimidine carboxylic acid), which is an excellent osmoprotectant. The protein is L-ectoine synthase (ectC) of Sporosarcina pasteurii (Bacillus pasteurii).